We begin with the raw amino-acid sequence, 149 residues long: SsrA-binding protein (149 aa).

Belongs to the SmpB family.

The protein localises to the cytoplasm. Required for rescue of stalled ribosomes mediated by trans-translation. Binds to transfer-messenger RNA (tmRNA), required for stable association of tmRNA with ribosomes. tmRNA and SmpB together mimic tRNA shape, replacing the anticodon stem-loop with SmpB. tmRNA is encoded by the ssrA gene; the 2 termini fold to resemble tRNA(Ala) and it encodes a 'tag peptide', a short internal open reading frame. During trans-translation Ala-aminoacylated tmRNA acts like a tRNA, entering the A-site of stalled ribosomes, displacing the stalled mRNA. The ribosome then switches to translate the ORF on the tmRNA; the nascent peptide is terminated with the 'tag peptide' encoded by the tmRNA and targeted for degradation. The ribosome is freed to recommence translation, which seems to be the essential function of trans-translation. This chain is SsrA-binding protein, found in Anaplasma marginale (strain St. Maries).